Here is a 114-residue protein sequence, read N- to C-terminus: Gas vesicle protein J (114 aa).

Residues 63-114 (PTGTDMERVEEAAGISPDESRSLDTRSESEQMDELPGEAGASVSNTAPQEEE) are disordered. Basic and acidic residues predominate over residues 80-91 (DESRSLDTRSES). Residues 104–114 (SVSNTAPQEEE) are compositionally biased toward polar residues.

This sequence belongs to the gas vesicle GvpA family. As to quaternary structure, gvpF to GvpM interact with each other in vitro, and may form multi-subunit complex(es). Interacts with GvpA.

It localises to the gas vesicle. Its function is as follows. A minor component of the gas vesicle, proteins GvpF to GvpM might be involved in nucleating gas vesicle formation. Gas vesicles are hollow, gas filled proteinaceous nanostructures found in some microorganisms. They allow positioning of halobacteria at the optimal depth for growth in the poorly aerated, shallow brine pools of their habitat. Expression of a 9.5 kb mc-vac DNA fragment containing 2 divergently transcribed regions (gvpD-gvpE-gvpF-gvpG-gvpH-gvpI-gvpJ-gvpK-gvpL-gvpM and gvpA-gvpC-gvpN-gvpO) allows H.volcanii to produce gas vesicles. In Haloferax mediterranei (strain ATCC 33500 / DSM 1411 / JCM 8866 / NBRC 14739 / NCIMB 2177 / R-4) (Halobacterium mediterranei), this protein is Gas vesicle protein J.